The sequence spans 453 residues: Kynureninase (453 aa).

Pyridoxal 5'-phosphate-binding positions include Leu114, Thr115, 142 to 145 (FPSD), Asp232, His235, and Tyr257. The residue at position 258 (Lys258) is an N6-(pyridoxal phosphate)lysine. Position 286 (Trp286) interacts with pyridoxal 5'-phosphate.

The protein belongs to the kynureninase family. Homodimer. Pyridoxal 5'-phosphate is required as a cofactor.

The protein resides in the cytoplasm. The enzyme catalyses L-kynurenine + H2O = anthranilate + L-alanine + H(+). The catalysed reaction is 3-hydroxy-L-kynurenine + H2O = 3-hydroxyanthranilate + L-alanine + H(+). The protein operates within amino-acid degradation; L-kynurenine degradation; L-alanine and anthranilate from L-kynurenine: step 1/1. Its pathway is cofactor biosynthesis; NAD(+) biosynthesis; quinolinate from L-kynurenine: step 2/3. Functionally, catalyzes the cleavage of L-kynurenine (L-Kyn) and L-3-hydroxykynurenine (L-3OHKyn) into anthranilic acid (AA) and 3-hydroxyanthranilic acid (3-OHAA), respectively. In Cryptococcus neoformans var. neoformans serotype D (strain B-3501A) (Filobasidiella neoformans), this protein is Kynureninase.